Consider the following 261-residue polypeptide: uncharacterized protein (261 aa).

Residues methionine 1 to glycine 22 form the signal peptide. Cysteine 23 carries N-palmitoyl cysteine lipidation. Cysteine 23 carries S-diacylglycerol cysteine lipidation.

This sequence belongs to the staphylococcal tandem lipoprotein family.

The protein localises to the cell membrane. This is an uncharacterized protein from Staphylococcus epidermidis (strain ATCC 12228 / FDA PCI 1200).